The following is a 367-amino-acid chain: UDP-N-acetylglucosamine--N-acetylmuramyl-(pentapeptide) pyrophosphoryl-undecaprenol N-acetylglucosamine transferase (367 aa).

UDP-N-acetyl-alpha-D-glucosamine contacts are provided by residues 15 to 17 (TGG), Asn127, Arg163, Ser191, Ile249, and Gln294.

Belongs to the glycosyltransferase 28 family. MurG subfamily.

The protein resides in the cell inner membrane. The enzyme catalyses di-trans,octa-cis-undecaprenyl diphospho-N-acetyl-alpha-D-muramoyl-L-alanyl-D-glutamyl-meso-2,6-diaminopimeloyl-D-alanyl-D-alanine + UDP-N-acetyl-alpha-D-glucosamine = di-trans,octa-cis-undecaprenyl diphospho-[N-acetyl-alpha-D-glucosaminyl-(1-&gt;4)]-N-acetyl-alpha-D-muramoyl-L-alanyl-D-glutamyl-meso-2,6-diaminopimeloyl-D-alanyl-D-alanine + UDP + H(+). It functions in the pathway cell wall biogenesis; peptidoglycan biosynthesis. Functionally, cell wall formation. Catalyzes the transfer of a GlcNAc subunit on undecaprenyl-pyrophosphoryl-MurNAc-pentapeptide (lipid intermediate I) to form undecaprenyl-pyrophosphoryl-MurNAc-(pentapeptide)GlcNAc (lipid intermediate II). In Burkholderia thailandensis (strain ATCC 700388 / DSM 13276 / CCUG 48851 / CIP 106301 / E264), this protein is UDP-N-acetylglucosamine--N-acetylmuramyl-(pentapeptide) pyrophosphoryl-undecaprenol N-acetylglucosamine transferase.